We begin with the raw amino-acid sequence, 880 residues long: Valine--tRNA ligase (880 aa).

The 'HIGH' region motif lies at 48 to 58; it reads PNVTGKLHLGH. The short motif at 524 to 528 is the 'KMSKS' region element; the sequence is KMSKS. An ATP-binding site is contributed by K527. Residues 808–879 adopt a coiled-coil conformation; that stretch reads LAGLINIEEE…VKERIAQLRS (72 aa).

This sequence belongs to the class-I aminoacyl-tRNA synthetase family. ValS type 1 subfamily. In terms of assembly, monomer.

It localises to the cytoplasm. The enzyme catalyses tRNA(Val) + L-valine + ATP = L-valyl-tRNA(Val) + AMP + diphosphate. Catalyzes the attachment of valine to tRNA(Val). As ValRS can inadvertently accommodate and process structurally similar amino acids such as threonine, to avoid such errors, it has a 'posttransfer' editing activity that hydrolyzes mischarged Thr-tRNA(Val) in a tRNA-dependent manner. This chain is Valine--tRNA ligase, found in Enterococcus faecalis (strain ATCC 700802 / V583).